A 1486-amino-acid chain; its full sequence is Glutamate synthase [NADPH] large chain (1486 aa).

A propeptide spanning residues 1 to 11 is cleaved from the precursor; it reads MLYDKSLERDN. C12 functions as the Nucleophile in the catalytic mechanism. One can recognise a Glutamine amidotransferase type-2 domain in the interval 12-402; the sequence is CGFGLIAHIE…PGELMVIDTR (391 aa). Residue 1049-1101 coordinates FMN; sequence LVETQQALVANGLRHKIRLQVDGGLKTGVDIIKAAILGAESFGFGTGPMVALG. Positions 1102, 1108, and 1113 each coordinate [3Fe-4S] cluster.

It belongs to the glutamate synthase family. Aggregate of 4 catalytic active heterodimers, consisting of a large and a small subunit. It depends on [3Fe-4S] cluster as a cofactor. Requires FAD as cofactor. FMN serves as cofactor.

The catalysed reaction is 2 L-glutamate + NADP(+) = L-glutamine + 2-oxoglutarate + NADPH + H(+). Its pathway is amino-acid biosynthesis; L-glutamate biosynthesis via GLT pathway; L-glutamate from 2-oxoglutarate and L-glutamine (NADP(+) route): step 1/1. It participates in energy metabolism; nitrogen metabolism. Functionally, catalyzes the conversion of L-glutamine and 2-oxoglutarate into two molecules of L-glutamate. The protein is Glutamate synthase [NADPH] large chain (gltB) of Escherichia coli (strain K12).